A 290-amino-acid polypeptide reads, in one-letter code: Potassium-transporting ATPase subunit beta (290 aa).

Topologically, residues 1–36 (MAALQEKKSCSQRMEEFQRYCWNPDTGQMLGRTLSR) are cytoplasmic. A helical; Signal-anchor for type II membrane protein membrane pass occupies residues 37 to 57 (WVWISLYYVAFYVVMTGIFAL). At 58–290 (CIYTLMCTLD…KVEFKLTIQQ (233 aa)) the chain is on the extracellular side. 5 N-linked (GlcNAc...) asparagine glycosylation sites follow: Asn99, Asn103, Asn130, Asn146, and Asn161. Cys131 and Cys152 form a disulfide bridge. A disulfide bridge links Cys162 with Cys178. 2 N-linked (GlcNAc...) asparagine glycosylation sites follow: Asn193 and Asn221. Residues 194–290 (STAPRADCTF…KVEFKLTIQQ (97 aa)) form an immunoglobulin-like region. A disulfide bond links Cys201 and Cys262.

Belongs to the X(+)/potassium ATPases subunit beta family. In terms of assembly, the ATPase pump is composed of two subunits: alpha (catalytic) and beta (regulatory). Interacts with alpha subunit ATP12A; this interaction is required for the formation of a functionally active pump and targeting at the plasma membrane. Interacts (via N-terminus) with alpha subunit ATP4A (via the P-domain). In terms of processing, N-glycosylation is necessary for assembly and functional expression of the pump at the plasma membrane.

It is found in the apical cell membrane. The protein resides in the cell membrane. In terms of biological role, the beta subunit of the gastric H(+)/K(+) ATPase pump which transports H(+) ions in exchange for K(+) ions across the apical membrane of parietal cells. Plays a structural and regulatory role in the assembly and membrane targeting of a functionally active pump. Within a transport cycle, the transfer of a H(+) ion across the membrane is coupled to ATP hydrolysis and is associated with a transient phosphorylation of the alpha subunit that shifts the pump conformation from inward-facing (E1) to outward-facing state (E2). Interacts with the phosphorylation domain of the alpha subunit and functions as a ratchet, stabilizing the lumenal-open E2 conformation and preventing the reverse reaction of the transport cycle. The protein is Potassium-transporting ATPase subunit beta (ATP4B) of Canis lupus familiaris (Dog).